Here is a 173-residue protein sequence, read N- to C-terminus: VQ motif-containing protein 31 (173 aa).

The VQ motif lies at 27-36 (FREIVQRLTG). A Phosphothreonine modification is found at Thr46. Disordered stretches follow at residues 76 to 105 (EIVKPPLSFKPTGTTPSSKSGNTNLLTSPV) and 143 to 173 (LHPSPRSKPGYTEPELLTLFPLTSPNSSGKP). Polar residues predominate over residues 86–105 (PTGTTPSSKSGNTNLLTSPV). A phosphoserine mark is found at Ser92, Ser103, Ser146, and Ser149. Residues 154–165 (TEPELLTLFPLT) are compositionally biased toward low complexity. Thr165 carries the post-translational modification Phosphothreonine. A phosphoserine mark is found at Ser166 and Ser170.

Post-translationally, phosphorylated on serine and threonine residues by MPK6.

The protein localises to the nucleus. In terms of biological role, may modulate WRKY transcription factor activities. This Arabidopsis thaliana (Mouse-ear cress) protein is VQ motif-containing protein 31.